A 367-amino-acid polypeptide reads, in one-letter code: Germination protease (367 aa).

The propeptide occupies 1–15 (MKEPLDLSKYSVRTD).

It belongs to the peptidase A25 family. In terms of assembly, homotetramer. Post-translationally, autoproteolytically processed. The inactive tetrameric zymogen termed p46 autoprocesses to a smaller form termed p41, which is active only during spore germination.

The catalysed reaction is Endopeptidase action with P4 Glu or Asp, P1 preferably Glu &gt; Asp, P1' hydrophobic and P2' Ala.. Initiates the rapid degradation of small, acid-soluble proteins during spore germination. In Bacillus mycoides (strain KBAB4) (Bacillus weihenstephanensis), this protein is Germination protease.